A 678-amino-acid chain; its full sequence is Macrolide export ATP-binding/permease protein MacB 1 (678 aa).

The region spanning 11-249 (LRLENVSREF…PKMVDIPSVI (239 aa)) is the ABC transporter domain. 47-54 (GTSGSGKS) serves as a coordination point for ATP. Transmembrane regions (helical) follow at residues 303–323 (ALTM…VALG), 558–578 (IAVI…LVSV), 608–628 (LVCL…GLLF), and 641–661 (AASI…FGFF).

It belongs to the ABC transporter superfamily. Macrolide exporter (TC 3.A.1.122) family. As to quaternary structure, homodimer. Part of the tripartite efflux system MacAB-TolC, which is composed of an inner membrane transporter, MacB, a periplasmic membrane fusion protein, MacA, and an outer membrane component, TolC. The complex forms a large protein conduit and can translocate molecules across both the inner and outer membranes. Interacts with MacA.

The protein resides in the cell inner membrane. In terms of biological role, part of the tripartite efflux system MacAB-TolC. MacB is a non-canonical ABC transporter that contains transmembrane domains (TMD), which form a pore in the inner membrane, and an ATP-binding domain (NBD), which is responsible for energy generation. Confers resistance against macrolides. This chain is Macrolide export ATP-binding/permease protein MacB 1, found in Yersinia pestis bv. Antiqua (strain Nepal516).